The following is a 380-amino-acid chain: Transaldolase (380 aa).

The active-site Schiff-base intermediate with substrate is the lysine 141.

It belongs to the transaldolase family. Type 2 subfamily.

It localises to the cytoplasm. The catalysed reaction is D-sedoheptulose 7-phosphate + D-glyceraldehyde 3-phosphate = D-erythrose 4-phosphate + beta-D-fructose 6-phosphate. The protein operates within carbohydrate degradation; pentose phosphate pathway; D-glyceraldehyde 3-phosphate and beta-D-fructose 6-phosphate from D-ribose 5-phosphate and D-xylulose 5-phosphate (non-oxidative stage): step 2/3. Functionally, transaldolase is important for the balance of metabolites in the pentose-phosphate pathway. The polypeptide is Transaldolase (Trichodesmium erythraeum (strain IMS101)).